We begin with the raw amino-acid sequence, 184 residues long: MTQRLKTFYLNTVVPKLRKQLEYQNIHQVPQVTKIVINCGLGEASQNAKSLESTLRDLSFITGQKPIVTRAKKSIAGFQIRAQMSVGVCVTLRADAMYAFLDRLIHLALPRIRDFQGLNSNSFDGHGNFHLGLKEQLMFPEIDYDKIEKLRGMDICIVTSSQNNKEALQLLVALGMPFQTTLTA.

The protein belongs to the universal ribosomal protein uL5 family. Part of the 50S ribosomal subunit; contacts the 5S rRNA.

The protein resides in the plastid. The protein localises to the chloroplast. Functionally, binds 5S rRNA, forms part of the central protuberance of the 50S subunit. This Zygnema circumcarinatum (Green alga) protein is Large ribosomal subunit protein uL5c (rpl5).